Consider the following 274-residue polypeptide: Rhamnulose-1-phosphate aldolase (274 aa).

Glu-117 is a catalytic residue. Zn(2+) contacts are provided by His-141, His-143, and His-212.

Belongs to the aldolase class II family. RhaD subfamily. Homotetramer. The cofactor is Zn(2+).

The protein resides in the cytoplasm. The catalysed reaction is L-rhamnulose 1-phosphate = (S)-lactaldehyde + dihydroxyacetone phosphate. It functions in the pathway carbohydrate degradation; L-rhamnose degradation; glycerone phosphate from L-rhamnose: step 3/3. Its function is as follows. Catalyzes the reversible cleavage of L-rhamnulose-1-phosphate to dihydroxyacetone phosphate (DHAP) and L-lactaldehyde. In Shigella sonnei (strain Ss046), this protein is Rhamnulose-1-phosphate aldolase.